The sequence spans 718 residues: Tensin-4 (718 aa).

An N-terminal signal peptide occupies residues 1 to 14; sequence MSSSLLTGGHVVSL. 2 disordered regions span residues 188-244 and 272-437; these read RETR…GLRA and LPHS…AKDM. The span at 192–207 shows a compositional bias: polar residues; the sequence is SSSNESLIFSGNQGRG. Positions 208 to 219 are enriched in low complexity; it reads SSPHTPSSLSNS. Ser-230 is modified (phosphoserine). The span at 272–304 shows a compositional bias: low complexity; the sequence is LPHSSLSSYPPSSRSLGSPASSSSSLHSLDRGS. 4 stretches are compositionally biased toward polar residues: residues 306-316, 337-349, 367-393, and 405-415; these read CVRSSDAQVPS, QASS…TNSM, PAQQ…QATK, and TSPSHLCQATK. Residues 451–558 enclose the SH2 domain; that stretch reads WFKPSITREQ…ALPCKLTIPQ (108 aa). In terms of domain architecture, PTB spans 585–711; that stretch reads CHTLYLTSVS…SQVISLVTAL (127 aa).

This sequence belongs to the PTEN phosphatase protein family. As to quaternary structure, interacts (via SH2 domain) with Rho GTPase-activating protein DLC1 (via C-terminus); the interaction is independent of DLC1 tyrosine phosphorylation. Interacts with integrin ITGB1; the interaction displaces tensin TNS3 from the ITGB1 cytoplasmic tail and promotes ITGB1 stability. Interacts (via SH2 domain) with E3 ubiquitin-protein ligase CBL (phosphorylated on 'Tyr-781'); the interaction is enhanced in the presence of EGF and reduces interaction of CBL with EGFR. Interacts (via SH2 domain) with receptor tyrosine kinase MET (when phosphorylated); the interaction increases MET protein stability.

The protein resides in the cell junction. It localises to the focal adhesion. The protein localises to the cytoplasm. It is found in the cytoskeleton. Promotes EGF-induced cell migration by displacing tensin TNS3 from the cytoplasmic tail of integrin ITGB1 which results in dissociation of TNS3 from focal adhesions, disassembly of actin stress fibers and initiation of cell migration. Suppresses ligand-induced degradation of EGFR by reducing EGFR ubiquitination in the presence of EGF. Increases MET protein stability by inhibiting MET endocytosis and subsequent lysosomal degradation which leads to increased cell survival, proliferation and migration. The chain is Tensin-4 (Tns4) from Rattus norvegicus (Rat).